Here is a 545-residue protein sequence, read N- to C-terminus: CTP synthase (545 aa).

The amidoligase domain stretch occupies residues 1–266 (MTTNYIFVTG…DDYICKRFSL (266 aa)). S14 contacts CTP. UTP is bound at residue S14. ATP contacts are provided by residues 15–20 (SLGKGI) and D72. Residues D72 and E140 each coordinate Mg(2+). CTP contacts are provided by residues 147-149 (DIE), 187-192 (KTKPTQ), and K223. UTP contacts are provided by residues 187-192 (KTKPTQ) and K223. Residue 239 to 241 (KDV) participates in ATP binding. Residues 291 to 542 (TIGMVGKYIE…VKAANEHQKR (252 aa)) enclose the Glutamine amidotransferase type-1 domain. G352 is a binding site for L-glutamine. C379 acts as the Nucleophile; for glutamine hydrolysis in catalysis. Residues 380 to 383 (LGMQ), E403, and R470 contribute to the L-glutamine site. Active-site residues include H515 and E517.

The protein belongs to the CTP synthase family. In terms of assembly, homotetramer.

The catalysed reaction is UTP + L-glutamine + ATP + H2O = CTP + L-glutamate + ADP + phosphate + 2 H(+). It catalyses the reaction L-glutamine + H2O = L-glutamate + NH4(+). The enzyme catalyses UTP + NH4(+) + ATP = CTP + ADP + phosphate + 2 H(+). Its pathway is pyrimidine metabolism; CTP biosynthesis via de novo pathway; CTP from UDP: step 2/2. Its activity is regulated as follows. Allosterically activated by GTP, when glutamine is the substrate; GTP has no effect on the reaction when ammonia is the substrate. The allosteric effector GTP functions by stabilizing the protein conformation that binds the tetrahedral intermediate(s) formed during glutamine hydrolysis. Inhibited by the product CTP, via allosteric rather than competitive inhibition. Functionally, catalyzes the ATP-dependent amination of UTP to CTP with either L-glutamine or ammonia as the source of nitrogen. Regulates intracellular CTP levels through interactions with the four ribonucleotide triphosphates. This Salmonella paratyphi A (strain ATCC 9150 / SARB42) protein is CTP synthase.